Here is a 379-residue protein sequence, read N- to C-terminus: Alanine racemase (379 aa).

Residue Lys-37 is the Proton acceptor; specific for D-alanine of the active site. Lys-37 carries the post-translational modification N6-(pyridoxal phosphate)lysine. A substrate-binding site is contributed by Arg-137. Tyr-269 serves as the catalytic Proton acceptor; specific for L-alanine. Met-317 serves as a coordination point for substrate.

Belongs to the alanine racemase family. Requires pyridoxal 5'-phosphate as cofactor.

The enzyme catalyses L-alanine = D-alanine. The protein operates within amino-acid biosynthesis; D-alanine biosynthesis; D-alanine from L-alanine: step 1/1. Its function is as follows. Catalyzes the interconversion of L-alanine and D-alanine. May also act on other amino acids. The chain is Alanine racemase (alr) from Geobacter sp. (strain M21).